The following is a 252-amino-acid chain: MTFLEEILAQKAVEVADMPLEKVAEKRKTYSFYEFLKANTSTMQLIAEVKRASPSKGEINMGVNPVLQAKSYQAAGAGMISVLTDPVFFKGSIEDLREVAKNVEIPVLCKDFIISEKQLIRARNAGATVVLLIISALTEEMLIALFEQALALDLEVLVEVHDQKELAVAQKIGAKLIGVNNRNLHTFEVDIAVSERLASDFSSDACFISESGFRTAEDVARVSQKYNAVLVGEALMREATPEAAAKSLKVTR.

It belongs to the TrpC family.

The enzyme catalyses 1-(2-carboxyphenylamino)-1-deoxy-D-ribulose 5-phosphate + H(+) = (1S,2R)-1-C-(indol-3-yl)glycerol 3-phosphate + CO2 + H2O. Its pathway is amino-acid biosynthesis; L-tryptophan biosynthesis; L-tryptophan from chorismate: step 4/5. The chain is Indole-3-glycerol phosphate synthase from Listeria monocytogenes serotype 4b (strain CLIP80459).